A 638-amino-acid polypeptide reads, in one-letter code: LIM domain kinase 2 (638 aa).

LIM zinc-binding domains lie at 12–63 (CQGC…CHKD) and 72–124 (CHGC…CGKC). One can recognise a PDZ domain in the interval 152–239 (HISMPATTEG…TLQLLIEHDP (88 aa)). The interval 280 to 304 (RRRSLRRSNSISKSPGPSSPKEPLL) is disordered. A compositionally biased stretch (low complexity) spans 286–304 (RSNSISKSPGPSSPKEPLL). Ser-293 and Ser-298 each carry phosphoserine. In terms of domain architecture, Protein kinase spans 331–608 (LIHGEVLGKG…DFFEALSLYL (278 aa)). ATP-binding positions include 337–345 (LGKGFFGQA) and Asn-360. Residue Asp-451 is part of the active site. Residue Thr-505 is modified to Phosphothreonine; by ROCK1 and CDC42BP.

The protein belongs to the protein kinase superfamily. TKL Ser/Thr protein kinase family. As to quaternary structure, binds ROCK1 and MARF1. Interacts with NISCH. Phosphorylated on serine and/or threonine residues by ROCK1.

It localises to the cytoplasm. Its subcellular location is the cytoskeleton. The protein resides in the spindle. It is found in the microtubule organizing center. The protein localises to the centrosome. It carries out the reaction L-seryl-[protein] + ATP = O-phospho-L-seryl-[protein] + ADP + H(+). The catalysed reaction is L-threonyl-[protein] + ATP = O-phospho-L-threonyl-[protein] + ADP + H(+). Functionally, serine/threonine-protein kinase that plays an essential role in the regulation of actin filament dynamics. Acts downstream of several Rho family GTPase signal transduction pathways. Involved in astral microtubule organization and mitotic spindle orientation during early stages of mitosis by mediating phosphorylation of TPPP. Displays serine/threonine-specific phosphorylation of myelin basic protein and histone (MBP) in vitro. Suppresses ciliogenesis via multiple pathways; phosphorylation of CFL1, suppression of directional trafficking of ciliary vesicles to the ciliary base, and by facilitating YAP1 nuclear localization where it acts as a transcriptional corepressor of the TEAD4 target genes AURKA and PLK1. This is LIM domain kinase 2 (LIMK2) from Bos taurus (Bovine).